A 480-amino-acid chain; its full sequence is Glycogen synthase (480 aa).

Position 15 (K15) interacts with ADP-alpha-D-glucose.

Belongs to the glycosyltransferase 1 family. Bacterial/plant glycogen synthase subfamily.

The enzyme catalyses [(1-&gt;4)-alpha-D-glucosyl](n) + ADP-alpha-D-glucose = [(1-&gt;4)-alpha-D-glucosyl](n+1) + ADP + H(+). Its pathway is glycan biosynthesis; glycogen biosynthesis. Its function is as follows. Synthesizes alpha-1,4-glucan chains using ADP-glucose. This Clostridioides difficile (strain 630) (Peptoclostridium difficile) protein is Glycogen synthase.